Reading from the N-terminus, the 505-residue chain is Cobyric acid synthase (505 aa).

The 194-residue stretch at 251–444 folds into the GATase cobBQ-type domain; it reads DIDVAVIKLP…IHGIFDNSEF (194 aa). Cys-332 functions as the Nucleophile in the catalytic mechanism. Residue His-436 is part of the active site.

It belongs to the CobB/CobQ family. CobQ subfamily.

The protein operates within cofactor biosynthesis; adenosylcobalamin biosynthesis. Its function is as follows. Catalyzes amidations at positions B, D, E, and G on adenosylcobyrinic A,C-diamide. NH(2) groups are provided by glutamine, and one molecule of ATP is hydrogenolyzed for each amidation. The protein is Cobyric acid synthase of Clostridium novyi (strain NT).